A 203-amino-acid chain; its full sequence is Holliday junction branch migration complex subunit RuvA (203 aa).

A domain I region spans residues 1–64 (MIGRLRGIIL…EDAQLLYGFN (64 aa)). A domain II region spans residues 65 to 142 (NKQERMLFRE…KGLHGDLFTP (78 aa)). The tract at residues 143–154 (AADLVLTSPNGP) is flexible linker. A domain III region spans residues 155-203 (TSDDAEQEAVAALVALGYKPQEASRMVSKIAKPDANSETLIREALRAAL).

The protein belongs to the RuvA family. As to quaternary structure, homotetramer. Forms an RuvA(8)-RuvB(12)-Holliday junction (HJ) complex. HJ DNA is sandwiched between 2 RuvA tetramers; dsDNA enters through RuvA and exits via RuvB. An RuvB hexamer assembles on each DNA strand where it exits the tetramer. Each RuvB hexamer is contacted by two RuvA subunits (via domain III) on 2 adjacent RuvB subunits; this complex drives branch migration. In the full resolvosome a probable DNA-RuvA(4)-RuvB(12)-RuvC(2) complex forms which resolves the HJ.

The protein localises to the cytoplasm. Functionally, the RuvA-RuvB-RuvC complex processes Holliday junction (HJ) DNA during genetic recombination and DNA repair, while the RuvA-RuvB complex plays an important role in the rescue of blocked DNA replication forks via replication fork reversal (RFR). RuvA specifically binds to HJ cruciform DNA, conferring on it an open structure. The RuvB hexamer acts as an ATP-dependent pump, pulling dsDNA into and through the RuvAB complex. HJ branch migration allows RuvC to scan DNA until it finds its consensus sequence, where it cleaves and resolves the cruciform DNA. The chain is Holliday junction branch migration complex subunit RuvA from Enterobacter sp. (strain 638).